The sequence spans 225 residues: Orotate phosphoribosyltransferase (225 aa).

Lys29 is a 5-phospho-alpha-D-ribose 1-diphosphate binding site. 37-38 (FF) serves as a coordination point for orotate. Residues 75-76 (YK), Arg101, Lys102, Lys105, His107, and 126-134 (DDVISAGTS) each bind 5-phospho-alpha-D-ribose 1-diphosphate. The orotate site is built by Ser130 and Arg158.

This sequence belongs to the purine/pyrimidine phosphoribosyltransferase family. PyrE subfamily. Homodimer. Requires Mg(2+) as cofactor.

The catalysed reaction is orotidine 5'-phosphate + diphosphate = orotate + 5-phospho-alpha-D-ribose 1-diphosphate. The protein operates within pyrimidine metabolism; UMP biosynthesis via de novo pathway; UMP from orotate: step 1/2. Its function is as follows. Catalyzes the transfer of a ribosyl phosphate group from 5-phosphoribose 1-diphosphate to orotate, leading to the formation of orotidine monophosphate (OMP). The sequence is that of Orotate phosphoribosyltransferase from Ralstonia pickettii (strain 12J).